A 208-amino-acid polypeptide reads, in one-letter code: Thymidylate kinase (208 aa).

ATP is bound at residue Gly-7 to Thr-14.

This sequence belongs to the thymidylate kinase family.

The catalysed reaction is dTMP + ATP = dTDP + ADP. Its function is as follows. Phosphorylation of dTMP to form dTDP in both de novo and salvage pathways of dTTP synthesis. The polypeptide is Thymidylate kinase (tmk) (Xylella fastidiosa (strain 9a5c)).